A 272-amino-acid polypeptide reads, in one-letter code: Small ribosomal subunit protein uS2 (272 aa).

Over residues 224–233 (EGKKAREERQ) the composition is skewed to basic and acidic residues. A disordered region spans residues 224–272 (EGKKAREERQLAAAKDAAGDAKPEAEEAPAAAEAEEAPAAEAEEAPAAE). Positions 256–272 (EAEEAPAAEAEEAPAAE) are enriched in acidic residues.

This sequence belongs to the universal ribosomal protein uS2 family.

This Corynebacterium glutamicum (strain ATCC 13032 / DSM 20300 / JCM 1318 / BCRC 11384 / CCUG 27702 / LMG 3730 / NBRC 12168 / NCIMB 10025 / NRRL B-2784 / 534) protein is Small ribosomal subunit protein uS2.